The following is a 916-amino-acid chain: DNA ligase 1 (916 aa).

The span at 1–10 (MQRSIMSFFQ) shows a compositional bias: polar residues. The tract at residues 1–197 (MQRSIMSFFQ…SPESVTLTKT (197 aa)) is disordered. A compositionally biased stretch (basic and acidic residues) spans 13–43 (KEGKAKKPEKETPSSIREKEPPPKVALKERN). Phosphoserine occurs at positions 49, 51, and 65. Position 77 is a phosphothreonine (threonine 77). Residues 99 to 111 (PENSPVFNCSSPM) are compositionally biased toward polar residues. A compositionally biased stretch (basic residues) spans 119–129 (PKRRTARKQLP). The residue at position 144 (lysine 144) is an N6-acetyllysine. The segment covering 153-177 (KEEETPKESLAEAEDIKQKEEKEGD) has biased composition (basic and acidic residues). The span at 185 to 197 (PTKSPESVTLTKT) shows a compositional bias: polar residues. The residue at position 193 (threonine 193) is a Phosphothreonine. Lysine 225 bears the N6-acetyllysine mark. Phosphoserine is present on residues serine 228 and serine 229. Threonine 232 carries the post-translational modification Phosphothreonine. Residues 236-266 (PAVKTEVKQEESGTLRKEETKGTLDPANYNP) form a disordered region. Over residues 238–257 (VKTEVKQEESGTLRKEETKG) the composition is skewed to basic and acidic residues. The tract at residues 447 to 456 (RLRLGLAEQS) is interaction with target DNA. Residue glutamate 564 participates in ATP binding. The active-site N6-AMP-lysine intermediate is lysine 566. Residues arginine 571 and glutamate 619 each contribute to the ATP site. Position 619 (glutamate 619) interacts with Mg(2+). Residues 640–642 (KRK) are interaction with target DNA. Glutamate 718 lines the Mg(2+) pocket. Residues lysine 723 and lysine 742 each contribute to the ATP site. Phosphothreonine is present on threonine 796. Residues serine 799, serine 906, serine 907, and serine 911 each carry the phosphoserine modification. The segment at 879–916 (DKQPEQATTSNQVASLYRKQSQIQNQQSSDLDSDVEDY) is disordered. Residues 883–908 (EQATTSNQVASLYRKQSQIQNQQSSD) are compositionally biased toward polar residues.

It belongs to the ATP-dependent DNA ligase family. Interacts with PCNA. Interacts with POLB. Mg(2+) is required as a cofactor.

It localises to the nucleus. The catalysed reaction is ATP + (deoxyribonucleotide)n-3'-hydroxyl + 5'-phospho-(deoxyribonucleotide)m = (deoxyribonucleotide)n+m + AMP + diphosphate.. Its function is as follows. DNA ligase that seals nicks in double-stranded during DNA repair. Also involved in DNA replication and DNA recombination. In Mus musculus (Mouse), this protein is DNA ligase 1 (Lig1).